The primary structure comprises 151 residues: Peptide methionine sulfoxide reductase MsrB (151 aa).

The 123-residue stretch at 5–127 folds into the MsrB domain; it reads KEERLKQLTR…NSAALRFVPK (123 aa). C116 functions as the Nucleophile in the catalytic mechanism.

This sequence belongs to the MsrB Met sulfoxide reductase family.

The enzyme catalyses L-methionyl-[protein] + [thioredoxin]-disulfide + H2O = L-methionyl-(R)-S-oxide-[protein] + [thioredoxin]-dithiol. The sequence is that of Peptide methionine sulfoxide reductase MsrB from Bacillus licheniformis (strain ATCC 14580 / DSM 13 / JCM 2505 / CCUG 7422 / NBRC 12200 / NCIMB 9375 / NCTC 10341 / NRRL NRS-1264 / Gibson 46).